Consider the following 440-residue polypeptide: Chromosome partition protein MukF (440 aa).

The tract at residues 208 to 236 (LSETSGTLRELQDTLEAAGDKLQANLLRI) is leucine-zipper.

It belongs to the MukF family. In terms of assembly, interacts, and probably forms a ternary complex, with MukE and MukB via its C-terminal region. The complex formation is stimulated by calcium or magnesium. It is required for an interaction between MukE and MukB.

Its subcellular location is the cytoplasm. It localises to the nucleoid. Involved in chromosome condensation, segregation and cell cycle progression. May participate in facilitating chromosome segregation by condensation DNA from both sides of a centrally located replisome during cell division. Not required for mini-F plasmid partitioning. Probably acts via its interaction with MukB and MukE. Overexpression results in anucleate cells. It has a calcium binding activity. The chain is Chromosome partition protein MukF from Escherichia coli O157:H7.